Here is a 400-residue protein sequence, read N- to C-terminus: Glutamyl-tRNA reductase (400 aa).

Substrate is bound by residues 45–48, serine 103, 108–110, and glutamine 114; these read TCNR and EDQ. Cysteine 46 functions as the Nucleophile in the catalytic mechanism. 179-184 is a binding site for NADP(+); that stretch reads GYGEIG.

Belongs to the glutamyl-tRNA reductase family. As to quaternary structure, homodimer.

It carries out the reaction (S)-4-amino-5-oxopentanoate + tRNA(Glu) + NADP(+) = L-glutamyl-tRNA(Glu) + NADPH + H(+). It participates in porphyrin-containing compound metabolism; protoporphyrin-IX biosynthesis; 5-aminolevulinate from L-glutamyl-tRNA(Glu): step 1/2. Its function is as follows. Catalyzes the NADPH-dependent reduction of glutamyl-tRNA(Glu) to glutamate 1-semialdehyde (GSA). This Clostridium perfringens (strain 13 / Type A) protein is Glutamyl-tRNA reductase.